Here is a 213-residue protein sequence, read N- to C-terminus: Adenylyl-sulfate kinase (213 aa).

Over residues 1–17 (MPAHQLDDHNQETRSDD) the composition is skewed to basic and acidic residues. A disordered region spans residues 1-20 (MPAHQLDDHNQETRSDDENI). 47-54 (GLSGSGKS) is an ATP binding site. Residue S121 is the Phosphoserine intermediate of the active site.

The protein belongs to the APS kinase family.

The catalysed reaction is adenosine 5'-phosphosulfate + ATP = 3'-phosphoadenylyl sulfate + ADP + H(+). The protein operates within sulfur metabolism; hydrogen sulfide biosynthesis; sulfite from sulfate: step 2/3. Its function is as follows. Catalyzes the synthesis of activated sulfate. The polypeptide is Adenylyl-sulfate kinase (Yersinia pestis).